The chain runs to 470 residues: Cysteine--tRNA ligase (470 aa).

Cys28 serves as a coordination point for Zn(2+). The 'HIGH' region signature appears at 30 to 40 (PTVYNYIHIGN). Residues Cys212, His237, and Glu241 each contribute to the Zn(2+) site. The 'KMSKS' region motif lies at 271-275 (KMSKS). Lys274 contributes to the ATP binding site.

The protein belongs to the class-I aminoacyl-tRNA synthetase family. Monomer. Requires Zn(2+) as cofactor.

It is found in the cytoplasm. It catalyses the reaction tRNA(Cys) + L-cysteine + ATP = L-cysteinyl-tRNA(Cys) + AMP + diphosphate. The protein is Cysteine--tRNA ligase of Levilactobacillus brevis (strain ATCC 367 / BCRC 12310 / CIP 105137 / JCM 1170 / LMG 11437 / NCIMB 947 / NCTC 947) (Lactobacillus brevis).